Consider the following 448-residue polypeptide: Proteases secretion protein PrtE (448 aa).

Over 1-30 the chain is Cytoplasmic; it reads MTGMDITTQDELNEAAMRDRASRDEERALR. The chain crosses the membrane as a helical span at residues 31-50; the sequence is LGWWLVLAGFGGFLLWALLA. The Periplasmic segment spans residues 51-448; the sequence is PLDKGVAVQG…DRMHLALTEE (398 aa).

This sequence belongs to the membrane fusion protein (MFP) (TC 8.A.1) family.

The protein localises to the cell inner membrane. In terms of biological role, involved in the secretion of proteases A, B, C and G. This is Proteases secretion protein PrtE (prtE) from Dickeya chrysanthemi (Pectobacterium chrysanthemi).